A 292-amino-acid chain; its full sequence is Syntaxin-19 (292 aa).

A compositionally biased stretch (basic and acidic residues) spans 1 to 24; it reads MKDRLPELKQRTKETELSKDKDVP. Positions 1–28 are disordered; it reads MKDRLPELKQRTKETELSKDKDVPTTEA. The stretch at 46 to 122 forms a coiled coil; that stretch reads VAERHLHEIQ…VKEVKKSEDE (77 aa). The 63-residue stretch at 209–271 folds into the t-SNARE coiled-coil homology domain; it reads LSEIEQRHKE…NTTKEKFGLA (63 aa).

Belongs to the syntaxin family. As to quaternary structure, interacts with EGFR.

It is found in the cell membrane. The protein resides in the cytoplasm. Plays a role in endosomal trafficking of the epidermal growth factor receptor (EGFR). The chain is Syntaxin-19 (STX19) from Bos taurus (Bovine).